Consider the following 304-residue polypeptide: Ribonuclease BN (304 aa).

Zn(2+)-binding residues include His63, His65, Asp67, His68, His140, Asp211, and His269. Asp67 functions as the Proton acceptor in the catalytic mechanism.

It belongs to the RNase Z family. RNase BN subfamily. In terms of assembly, homodimer. It depends on Zn(2+) as a cofactor.

Zinc phosphodiesterase, which has both exoribonuclease and endoribonuclease activities. This Erwinia tasmaniensis (strain DSM 17950 / CFBP 7177 / CIP 109463 / NCPPB 4357 / Et1/99) protein is Ribonuclease BN.